The following is a 159-amino-acid chain: Putative pre-16S rRNA nuclease (159 aa).

This sequence belongs to the YqgF nuclease family.

Its subcellular location is the cytoplasm. Its function is as follows. Could be a nuclease involved in processing of the 5'-end of pre-16S rRNA. The sequence is that of Putative pre-16S rRNA nuclease from Synechococcus sp. (strain JA-3-3Ab) (Cyanobacteria bacterium Yellowstone A-Prime).